The chain runs to 161 residues: Vitamin K epoxide reductase complex subunit 1 (161 aa).

At 1 to 9 (MGTTWRSPG) the chain is on the cytoplasmic side. A helical membrane pass occupies residues 10-29 (LVRLALCLAGLALSLYALHV). The Lumenal segment spans residues 30–80 (KAARARDENYRALCDVGTAISCSRVFSSRWGRGFGLVEHMLGADSVLNQSN). C43 and C51 are joined by a disulfide. N80 serves as a coordination point for (S)-warfarin. Residues 81–95 (SIFGCLFYTLQLLLG) form a helical membrane-spanning segment. The Cytoplasmic segment spans residues 96–100 (CLRGR). Residues 101–128 (WASILLVLSSLVSVAGSVYLAWILFFVL) traverse the membrane as a helical segment. Residues 129–131 (YDF) are Lumenal-facing. C132 and C135 are disulfide-bonded. Residues 132-153 (CIVCITTYAINVGLMLLSFQKV) traverse the membrane as a helical segment. Phylloquinone is bound by residues C135 and Y139. Y139 provides a ligand contact to (S)-warfarin. Residues 154–161 (PEHKTKKH) lie on the Cytoplasmic side of the membrane.

It belongs to the VKOR family. In terms of tissue distribution, detected in liver.

It localises to the endoplasmic reticulum membrane. It catalyses the reaction phylloquinone + [protein]-disulfide + H2O = 2,3-epoxyphylloquinone + [protein]-dithiol. The enzyme catalyses phylloquinol + [protein]-disulfide = phylloquinone + [protein]-dithiol. Inhibited by warfarin (coumadin). Warfarin locks VKORC1 in both redox states into the closed conformation. Its function is as follows. Involved in vitamin K metabolism. Catalytic subunit of the vitamin K epoxide reductase (VKOR) complex which reduces inactive vitamin K 2,3-epoxide to active vitamin K. Vitamin K is required for the gamma-carboxylation of various proteins, including clotting factors, and is required for normal blood coagulation, but also for normal bone development. This is Vitamin K epoxide reductase complex subunit 1 (Vkorc1) from Mus musculus (Mouse).